Here is an 807-residue protein sequence, read N- to C-terminus: Poly-beta-1,6-N-acetyl-D-glucosamine export protein (807 aa).

An N-terminal signal peptide occupies residues Met-1 to Ala-26. TPR repeat units lie at residues Ala-98–Asn-131, Lys-165–Thr-198, and Arg-279–Ile-311.

The protein resides in the cell outer membrane. In terms of biological role, exports the biofilm adhesin polysaccharide poly-beta-1,6-N-acetyl-D-glucosamine (PGA) across the outer membrane. The PGA transported seems to be partially N-deacetylated since N-deacetylation of PGA by PgaB is needed for PGA export through the PgaA porin. The polypeptide is Poly-beta-1,6-N-acetyl-D-glucosamine export protein (pgaA) (Escherichia coli O157:H7).